Consider the following 103-residue polypeptide: Interleukin-8 (103 aa).

Positions 1–25 (MTSKLAVAFLAVFLLSAALCEAAVL) are cleaved as a signal peptide. Arg-27 carries the citrulline modification. 2 disulfide bridges follow: Cys-34-Cys-61 and Cys-36-Cys-77.

Belongs to the intercrine alpha (chemokine CxC) family. As to quaternary structure, homodimer. Interacts with TNFAIP6 (via Link domain); this interaction interferes with chemokine binding to glycosaminoglycans. Post-translationally, citrullination at Arg-27 prevents proteolysis, and dampens tissue inflammation, it also enhances leukocytosis, possibly through impaired chemokine clearance from the blood circulation. In terms of tissue distribution, alveolar macrophages.

It is found in the secreted. Its function is as follows. Chemotactic factor that mediates inflammatory response by attracting neutrophils, basophils, and T-cells to clear pathogens and protect the host from infection. Also plays an important role in neutrophil activation. Released in response to an inflammatory stimulus, exerts its effect by binding to the G-protein-coupled receptors CXCR1 and CXCR2, primarily found in neutrophils, monocytes and endothelial cells. G-protein heterotrimer (alpha, beta, gamma subunits) constitutively binds to CXCR1/CXCR2 receptor and activation by IL8 leads to beta and gamma subunits release from Galpha (GNAI2 in neutrophils) and activation of several downstream signaling pathways including PI3K and MAPK pathways. This Sus scrofa (Pig) protein is Interleukin-8 (CXCL8).